A 393-amino-acid polypeptide reads, in one-letter code: S-adenosylmethionine synthase 3 (393 aa).

Glu9 is a Mg(2+) binding site. Residue His15 coordinates ATP. Glu43 is a K(+) binding site. L-methionine contacts are provided by Glu56 and Gln99. ATP is bound by residues 167–169 (DGK), 235–238 (SGRF), Asp246, 252–253 (RK), Ala269, Lys273, and Lys277. Asp246 contacts L-methionine. Lys277 provides a ligand contact to L-methionine.

This sequence belongs to the AdoMet synthase family. As to quaternary structure, homotetramer. It depends on Mn(2+) as a cofactor. Mg(2+) is required as a cofactor. The cofactor is Co(2+). Requires K(+) as cofactor.

The protein localises to the cytoplasm. It catalyses the reaction L-methionine + ATP + H2O = S-adenosyl-L-methionine + phosphate + diphosphate. It functions in the pathway amino-acid biosynthesis; S-adenosyl-L-methionine biosynthesis; S-adenosyl-L-methionine from L-methionine: step 1/1. In terms of biological role, catalyzes the formation of S-adenosylmethionine from methionine and ATP. The reaction comprises two steps that are both catalyzed by the same enzyme: formation of S-adenosylmethionine (AdoMet) and triphosphate, and subsequent hydrolysis of the triphosphate. The polypeptide is S-adenosylmethionine synthase 3 (SAM3) (Petunia hybrida (Petunia)).